Consider the following 121-residue polypeptide: Basic phospholipase A2 (121 aa).

7 disulfide bridges follow: Cys-26/Cys-114, Cys-28/Cys-44, Cys-43/Cys-94, Cys-49/Cys-121, Cys-50/Cys-87, Cys-57/Cys-80, and Cys-74/Cys-85. Ca(2+) is bound by residues Tyr-27, Gly-29, and Gly-31. Residue His-47 is part of the active site. Position 48 (Asp-48) interacts with Ca(2+). Asp-88 is an active-site residue.

As to quaternary structure, homopentamer. It depends on Ca(2+) as a cofactor. Expressed by the venom gland.

It is found in the secreted. It catalyses the reaction a 1,2-diacyl-sn-glycero-3-phosphocholine + H2O = a 1-acyl-sn-glycero-3-phosphocholine + a fatty acid + H(+). Its function is as follows. Snake venom phospholipase A2 (PLA2) that displays moderate myotoxic activity in vivo, and cytotoxic activity in vitro. In vitro, shows anticoagulant activity on human plasma and in mice causes inflammatory cell infiltration and myonecrosis in the gastrocnemius muscles of CD-1 mice 3 hours after injection (100 ug). PLA2 catalyzes the calcium-dependent hydrolysis of the 2-acyl groups in 3-sn-phosphoglycerides. The chain is Basic phospholipase A2 from Porthidium ophryomegas (Slender hognose viper).